The chain runs to 316 residues: Putative HTH-type transcriptional regulatory protein PYRAB03670 (316 aa).

The HTH cro/C1-type domain maps to 131–189 (LKDLREKHGYSLSELANILGVSRKSLQRYEKGDSMVTLEVALRLEEVFDEALVKPINVL). The segment at residues 142–161 (LSELANILGVSRKSLQRYEK) is a DNA-binding region (H-T-H motif).

This is Putative HTH-type transcriptional regulatory protein PYRAB03670 from Pyrococcus abyssi (strain GE5 / Orsay).